Here is a 255-residue protein sequence, read N- to C-terminus: Aliphatic sulfonates import ATP-binding protein SsuB (255 aa).

The ABC transporter domain occupies 12–233 (LLLNAVSKHY…RLGSVRLAEL (222 aa)). 44–51 (GRSGGGKS) provides a ligand contact to ATP.

The protein belongs to the ABC transporter superfamily. Aliphatic sulfonates importer (TC 3.A.1.17.2) family. As to quaternary structure, the complex is composed of two ATP-binding proteins (SsuB), two transmembrane proteins (SsuC) and a solute-binding protein (SsuA).

Its subcellular location is the cell inner membrane. The enzyme catalyses ATP + H2O + aliphatic sulfonate-[sulfonate-binding protein]Side 1 = ADP + phosphate + aliphatic sulfonateSide 2 + [sulfonate-binding protein]Side 1.. Part of the ABC transporter complex SsuABC involved in aliphatic sulfonates import. Responsible for energy coupling to the transport system. The protein is Aliphatic sulfonates import ATP-binding protein SsuB of Shigella flexneri serotype 5b (strain 8401).